We begin with the raw amino-acid sequence, 249 residues long: Exosome complex component Rrp4 (249 aa).

Residues 73–144 (NDIVIGLVED…RSIDPVLSVK (72 aa)) enclose the S1 motif domain. The 58-residue stretch at 154 to 211 (GIVIDIMPVKVPRVIGKNKSMYETLTSKSGCSIFVANNGRIWATCPSRFSEEILIEAI) folds into the KH domain.

The protein belongs to the RRP4 family. In terms of assembly, component of the archaeal exosome complex. Forms a trimer of Rrp4 and/or Csl4 subunits. The trimer associates with a hexameric ring-like arrangement composed of 3 Rrp41-Rrp42 heterodimers.

The protein localises to the cytoplasm. Its function is as follows. Non-catalytic component of the exosome, which is a complex involved in RNA degradation. Increases the RNA binding and the efficiency of RNA degradation. Confers strong poly(A) specificity to the exosome. This is Exosome complex component Rrp4 from Saccharolobus solfataricus (strain ATCC 35092 / DSM 1617 / JCM 11322 / P2) (Sulfolobus solfataricus).